A 200-amino-acid polypeptide reads, in one-letter code: Octanoyltransferase (200 aa).

The BPL/LPL catalytic domain occupies 27–200 (GAEDDQLWLV…WAELFSARWR (174 aa)). Substrate contacts are provided by residues 66 to 73 (RGGQITYH), 134 to 136 (SLG), and 147 to 149 (GIA). Catalysis depends on cysteine 165, which acts as the Acyl-thioester intermediate.

Belongs to the LipB family.

The protein resides in the cytoplasm. It carries out the reaction octanoyl-[ACP] + L-lysyl-[protein] = N(6)-octanoyl-L-lysyl-[protein] + holo-[ACP] + H(+). The protein operates within protein modification; protein lipoylation via endogenous pathway; protein N(6)-(lipoyl)lysine from octanoyl-[acyl-carrier-protein]: step 1/2. In terms of biological role, catalyzes the transfer of endogenously produced octanoic acid from octanoyl-acyl-carrier-protein onto the lipoyl domains of lipoate-dependent enzymes. Lipoyl-ACP can also act as a substrate although octanoyl-ACP is likely to be the physiological substrate. The protein is Octanoyltransferase of Dichelobacter nodosus (strain VCS1703A).